A 185-amino-acid chain; its full sequence is Large ribosomal subunit protein bL25 (185 aa).

It belongs to the bacterial ribosomal protein bL25 family. CTC subfamily. Part of the 50S ribosomal subunit; part of the 5S rRNA/L5/L18/L25 subcomplex. Contacts the 5S rRNA. Binds to the 5S rRNA independently of L5 and L18.

Its function is as follows. This is one of the proteins that binds to the 5S RNA in the ribosome where it forms part of the central protuberance. This chain is Large ribosomal subunit protein bL25, found in Chlamydia muridarum (strain MoPn / Nigg).